A 427-amino-acid polypeptide reads, in one-letter code: 3-phosphoshikimate 1-carboxyvinyltransferase (427 aa).

3-phosphoshikimate is bound by residues Lys22, Ser23, and Arg27. Lys22 contributes to the phosphoenolpyruvate binding site. Residues Gly96 and Arg124 each contribute to the phosphoenolpyruvate site. 3-phosphoshikimate contacts are provided by Ser169, Ser170, Gln171, Ser197, Asp313, Asn336, and Lys340. Gln171 provides a ligand contact to phosphoenolpyruvate. The active-site Proton acceptor is the Asp313. Phosphoenolpyruvate contacts are provided by Arg344, Arg386, and Lys411.

Belongs to the EPSP synthase family. Monomer.

The protein resides in the cytoplasm. The enzyme catalyses 3-phosphoshikimate + phosphoenolpyruvate = 5-O-(1-carboxyvinyl)-3-phosphoshikimate + phosphate. The protein operates within metabolic intermediate biosynthesis; chorismate biosynthesis; chorismate from D-erythrose 4-phosphate and phosphoenolpyruvate: step 6/7. Its function is as follows. Catalyzes the transfer of the enolpyruvyl moiety of phosphoenolpyruvate (PEP) to the 5-hydroxyl of shikimate-3-phosphate (S3P) to produce enolpyruvyl shikimate-3-phosphate and inorganic phosphate. The polypeptide is 3-phosphoshikimate 1-carboxyvinyltransferase (Escherichia coli O9:H4 (strain HS)).